Reading from the N-terminus, the 77-residue chain is MVAYPEISWTRNGCTVAKYPEISWTRNGCTVSKYPEISWTRNGCTVSKYPEISWTRNGCTVSKYPEISWTRNGCTVA.

Residues 1–3 (MVA) constitute a propeptide that is removed on maturation. A lipid anchor (S-farnesyl cysteine) is attached at cysteine 14. The propeptide occupies 15-18 (TVAK). Cysteine 29 carries S-farnesyl cysteine lipidation. The propeptide occupies 30–33 (TVSK). Cysteine 44 is lipidated: S-farnesyl cysteine. Residues 45-48 (TVSK) constitute a propeptide that is removed on maturation. A lipid anchor (S-farnesyl cysteine) is attached at cysteine 59. Positions 60–63 (TVSK) are excised as a propeptide. Residue cysteine 74 is the site of S-farnesyl cysteine attachment. A propeptide spanning residues 75 to 77 (TVA) is cleaved from the precursor.

The protein localises to the cell membrane. In terms of biological role, rhodotorucin-A is a mating pheromone in cells of mating type A of Rhodosporidium toruloides. The polypeptide is Rhodotorucin-A peptides type 2 (RHA2) (Rhodotorula toruloides (Yeast)).